The primary structure comprises 544 residues: Cytochrome P450 2U1 (544 aa).

A run of 4 helical transmembrane segments spans residues 30–50 (LDPSGGALLLCGLVALLGWSW), 113–133 (VYGSIFSFFIGHYLVVVLSDF), 261–281 (ICLNSQVLLVNICPWLYYLPF), and 342–362 (LFYIIGDLFIAGTDTTTNSLL). Cys-490 is a binding site for heme. Residues 495 to 515 (LAKMELFLMFVSLMQSFAFAL) form a helical membrane-spanning segment.

It belongs to the cytochrome P450 family. Heme is required as a cofactor. In terms of tissue distribution, widely expressed with stronger expression in thymus, heart and cerebellum.

It is found in the endoplasmic reticulum membrane. The protein localises to the microsome membrane. The protein resides in the mitochondrion inner membrane. It catalyses the reaction an omega-methyl-long-chain fatty acid + reduced [NADPH--hemoprotein reductase] + O2 = an omega-hydroxy-long-chain fatty acid + oxidized [NADPH--hemoprotein reductase] + H2O + H(+). The enzyme catalyses (5Z,8Z,11Z,14Z)-eicosatetraenoate + reduced [NADPH--hemoprotein reductase] + O2 = 19-hydroxy-(5Z,8Z,11Z,14Z)-eicosatetraenoate + oxidized [NADPH--hemoprotein reductase] + H2O + H(+). The catalysed reaction is (5Z,8Z,11Z,14Z)-eicosatetraenoate + reduced [NADPH--hemoprotein reductase] + O2 = 20-hydroxy-(5Z,8Z,11Z,14Z)-eicosatetraenoate + oxidized [NADPH--hemoprotein reductase] + H2O + H(+). It carries out the reaction N-[(5Z,8Z,11Z,14Z)-eicosatetraenoyl]-serotonin + reduced [NADPH--hemoprotein reductase] + O2 = 2-oxo-N-[(5Z,8Z,11Z,14Z)-eicosatetraenoyl]-serotonin + oxidized [NADPH--hemoprotein reductase] + H2O + H(+). The protein operates within lipid metabolism; arachidonate metabolism. Functionally, a cytochrome P450 monooxygenase involved in the metabolism of arachidonic acid and its conjugates. Mechanistically, uses molecular oxygen inserting one oxygen atom into a substrate, and reducing the second into a water molecule, with two electrons provided by NADPH via cytochrome P450 reductase (CPR; NADPH-ferrihemoprotein reductase). Acts as an omega and omega-1 hydroxylase for arachidonic acid and possibly for other long chain fatty acids. May modulate the arachidonic acid signaling pathway and play a role in other fatty acid signaling processes. May down-regulate the biological activities of N-arachidonoyl-serotonin, an endocannabinoid that has anti-nociceptive effects through inhibition of fatty acid amide hydrolase FAAH, TRPV1 receptor and T-type calcium channels. Catalyzes C-2 oxidation of the indole ring of N-arachidonoyl-serotonin forming a less active product 2-oxo-N-arachidonoyl-serotonin. This chain is Cytochrome P450 2U1, found in Homo sapiens (Human).